Consider the following 289-residue polypeptide: Energy-coupling factor transporter ATP-binding protein EcfA2 (289 aa).

Residues 7-251 (IILDNVSYTY…IELLTKIEID (245 aa)) form the ABC transporter domain. Residue 44–51 (GTTGSGKS) participates in ATP binding.

The protein belongs to the ABC transporter superfamily. Energy-coupling factor EcfA family. Forms a stable energy-coupling factor (ECF) transporter complex composed of 2 membrane-embedded substrate-binding proteins (S component), 2 ATP-binding proteins (A component) and 2 transmembrane proteins (T component).

It localises to the cell membrane. In terms of biological role, ATP-binding (A) component of a common energy-coupling factor (ECF) ABC-transporter complex. Unlike classic ABC transporters this ECF transporter provides the energy necessary to transport a number of different substrates. The protein is Energy-coupling factor transporter ATP-binding protein EcfA2 of Mycoplasma capricolum subsp. capricolum (strain California kid / ATCC 27343 / NCTC 10154).